Reading from the N-terminus, the 66-residue chain is Large ribosomal subunit protein bL31 (66 aa).

Positions 16, 18, 36, and 39 each coordinate Zn(2+).

The protein belongs to the bacterial ribosomal protein bL31 family. Type A subfamily. As to quaternary structure, part of the 50S ribosomal subunit. It depends on Zn(2+) as a cofactor.

In terms of biological role, binds the 23S rRNA. The chain is Large ribosomal subunit protein bL31 from Priestia megaterium (Bacillus megaterium).